The chain runs to 228 residues: Large ribosomal subunit protein bL25 (228 aa).

A disordered region spans residues 196–228; it reads EEAAVAEAQSAESAEGKAEAEAEATNEKNKSEA. Residues 209–228 show a composition bias toward basic and acidic residues; the sequence is AEGKAEAEAEATNEKNKSEA.

Belongs to the bacterial ribosomal protein bL25 family. CTC subfamily. As to quaternary structure, part of the 50S ribosomal subunit; part of the 5S rRNA/L5/L18/L25 subcomplex. Contacts the 5S rRNA. Binds to the 5S rRNA independently of L5 and L18.

Its function is as follows. This is one of the proteins that binds to the 5S RNA in the ribosome where it forms part of the central protuberance. This Methylorubrum extorquens (strain PA1) (Methylobacterium extorquens) protein is Large ribosomal subunit protein bL25.